The sequence spans 277 residues: Formamidopyrimidine-DNA glycosylase (277 aa).

The Schiff-base intermediate with DNA role is filled by P2. E3 functions as the Proton donor in the catalytic mechanism. The active-site Proton donor; for beta-elimination activity is the K58. Residues H94, R113, and R156 each contribute to the DNA site. An FPG-type zinc finger spans residues 241–277 (LVYGREGVPCPNCGAEHPIQRITQAGRSTFFCPTCQK). Residue R267 is the Proton donor; for delta-elimination activity of the active site.

The protein belongs to the FPG family. As to quaternary structure, monomer. Requires Zn(2+) as cofactor.

The enzyme catalyses Hydrolysis of DNA containing ring-opened 7-methylguanine residues, releasing 2,6-diamino-4-hydroxy-5-(N-methyl)formamidopyrimidine.. It carries out the reaction 2'-deoxyribonucleotide-(2'-deoxyribose 5'-phosphate)-2'-deoxyribonucleotide-DNA = a 3'-end 2'-deoxyribonucleotide-(2,3-dehydro-2,3-deoxyribose 5'-phosphate)-DNA + a 5'-end 5'-phospho-2'-deoxyribonucleoside-DNA + H(+). In terms of biological role, involved in base excision repair of DNA damaged by oxidation or by mutagenic agents. Acts as a DNA glycosylase that recognizes and removes damaged bases. Has a preference for oxidized purines, such as 7,8-dihydro-8-oxoguanine (8-oxoG). Has AP (apurinic/apyrimidinic) lyase activity and introduces nicks in the DNA strand. Cleaves the DNA backbone by beta-delta elimination to generate a single-strand break at the site of the removed base with both 3'- and 5'-phosphates. This is Formamidopyrimidine-DNA glycosylase from Gluconobacter oxydans (strain 621H) (Gluconobacter suboxydans).